A 61-amino-acid polypeptide reads, in one-letter code: Large ribosomal subunit protein uL30 (61 aa).

It belongs to the universal ribosomal protein uL30 family. Part of the 50S ribosomal subunit.

The sequence is that of Large ribosomal subunit protein uL30 from Frankia alni (strain DSM 45986 / CECT 9034 / ACN14a).